The following is a 170-amino-acid chain: Inner membrane protein p22 (170 aa).

Residues 1–3 (MST) lie on the Intravirion side of the membrane. The helical transmembrane segment at 4–24 (LLIALIALIVLLIIILVVFLY) threads the bilayer. At 25–170 (YKKQQPPKKV…LYLPRNHKYA (146 aa)) the chain is on the virion surface side.

Belongs to the asfivirus inner membrane protein p22 family.

The protein resides in the virion membrane. Its subcellular location is the host cell membrane. This is Inner membrane protein p22 from Ornithodoros (relapsing fever ticks).